The following is a 205-amino-acid chain: GTP cyclohydrolase-2 (205 aa).

Residue 49–53 (RIHSE) participates in GTP binding. Cys-54, Cys-65, and Cys-67 together coordinate Zn(2+). GTP contacts are provided by residues Gln-70, 92-94 (EGR), and Thr-114. Asp-126 (proton acceptor) is an active-site residue. Arg-128 (nucleophile) is an active-site residue. 2 residues coordinate GTP: Thr-149 and Lys-154.

It belongs to the GTP cyclohydrolase II family. It depends on Zn(2+) as a cofactor.

It catalyses the reaction GTP + 4 H2O = 2,5-diamino-6-hydroxy-4-(5-phosphoribosylamino)-pyrimidine + formate + 2 phosphate + 3 H(+). It participates in cofactor biosynthesis; riboflavin biosynthesis; 5-amino-6-(D-ribitylamino)uracil from GTP: step 1/4. Its function is as follows. Catalyzes the conversion of GTP to 2,5-diamino-6-ribosylamino-4(3H)-pyrimidinone 5'-phosphate (DARP), formate and pyrophosphate. This chain is GTP cyclohydrolase-2, found in Shewanella piezotolerans (strain WP3 / JCM 13877).